Consider the following 128-residue polypeptide: Large ribosomal subunit protein bL17 (128 aa).

Belongs to the bacterial ribosomal protein bL17 family. As to quaternary structure, part of the 50S ribosomal subunit. Contacts protein L32.

In Pseudomonas savastanoi pv. phaseolicola (strain 1448A / Race 6) (Pseudomonas syringae pv. phaseolicola (strain 1448A / Race 6)), this protein is Large ribosomal subunit protein bL17.